We begin with the raw amino-acid sequence, 281 residues long: Splicing regulator RBM11 (281 aa).

One can recognise an RRM domain in the interval 10 to 87; it reads RTVFVGNLEA…RPINVQYRFG (78 aa). Positions 184–281 are disordered; the sequence is PSSYKWTHQQ…FRKSKKKKRY (98 aa). Composition is skewed to polar residues over residues 187–217 and 229–242; these read YKWTHQQPSDSDLYQMTAPLPNSASVSSSLN and YKWTHQQPSDSDLY. The Bipartite nuclear localization signal signature appears at 245–280; the sequence is NKRKRQKQTSDSDSSTDNNRGNECSQKFRKSKKKKR. Basic residues predominate over residues 271-281; the sequence is KFRKSKKKKRY.

Homodimer. In terms of tissue distribution, expressed in brain, hippocampus, prefrontal cortex, cerebellum, spinal cord, testis, mammary gland, spleen and kidney. Also expressed in fetal brain.

It is found in the nucleus. The protein resides in the nucleoplasm. Its subcellular location is the nucleus speckle. Its function is as follows. Tissue-specific splicing factor with potential implication in the regulation of alternative splicing during neuron and germ cell differentiation. Antagonizes SRSF1-mediated BCL-X splicing. May affect the choice of alternative 5' splice sites by binding to specific sequences in exons and antagonizing the SR protein SRSF1. In Homo sapiens (Human), this protein is Splicing regulator RBM11.